The following is a 177-amino-acid chain: ATP synthase subunit delta (177 aa).

It belongs to the ATPase delta chain family. In terms of assembly, F-type ATPases have 2 components, F(1) - the catalytic core - and F(0) - the membrane proton channel. F(1) has five subunits: alpha(3), beta(3), gamma(1), delta(1), epsilon(1). F(0) has three main subunits: a(1), b(2) and c(10-14). The alpha and beta chains form an alternating ring which encloses part of the gamma chain. F(1) is attached to F(0) by a central stalk formed by the gamma and epsilon chains, while a peripheral stalk is formed by the delta and b chains.

It is found in the cell membrane. Its function is as follows. F(1)F(0) ATP synthase produces ATP from ADP in the presence of a proton or sodium gradient. F-type ATPases consist of two structural domains, F(1) containing the extramembraneous catalytic core and F(0) containing the membrane proton channel, linked together by a central stalk and a peripheral stalk. During catalysis, ATP synthesis in the catalytic domain of F(1) is coupled via a rotary mechanism of the central stalk subunits to proton translocation. This protein is part of the stalk that links CF(0) to CF(1). It either transmits conformational changes from CF(0) to CF(1) or is implicated in proton conduction. The protein is ATP synthase subunit delta of Buchnera aphidicola subsp. Acyrthosiphon pisum (strain 5A).